The following is a 295-amino-acid chain: tRNA dimethylallyltransferase (295 aa).

11–18 (GPTVSGKS) is an ATP binding site. 13 to 18 (TVSGKS) is a substrate binding site. Interaction with substrate tRNA regions lie at residues 36–39 (DSMQ) and 158–162 (QRIIR).

This sequence belongs to the IPP transferase family. As to quaternary structure, monomer. It depends on Mg(2+) as a cofactor.

The enzyme catalyses adenosine(37) in tRNA + dimethylallyl diphosphate = N(6)-dimethylallyladenosine(37) in tRNA + diphosphate. Functionally, catalyzes the transfer of a dimethylallyl group onto the adenine at position 37 in tRNAs that read codons beginning with uridine, leading to the formation of N6-(dimethylallyl)adenosine (i(6)A). The polypeptide is tRNA dimethylallyltransferase (Bartonella quintana (strain Toulouse) (Rochalimaea quintana)).